A 1910-amino-acid polypeptide reads, in one-letter code: C2 domain-containing protein (1910 aa).

Over residues 1-28 (MMKLKEMVEAAEAKVESKPPQAAEEKAP) the composition is skewed to basic and acidic residues. Disordered regions lie at residues 1-54 (MMKL…EPLD), 355-377 (AMKL…PEDG), and 398-428 (LEEL…DGPQ). Residues 414 to 423 (KGEDKKDGNK) are compositionally biased toward basic and acidic residues. Positions 557–678 (QLGEVSESDS…FFNEKHNKRN (122 aa)) constitute a C2 domain. Basic and acidic residues-rich tracts occupy residues 1192–1205 (LAQK…DAQR) and 1215–1228 (GHEG…DKQG). 6 disordered regions span residues 1192–1267 (LAQK…VKKG), 1405–1424 (ATAG…RDMQ), 1431–1654 (LEEA…SMGA), 1666–1747 (QRKH…FLSS), 1822–1841 (AKEE…DWSD), and 1879–1910 (DACS…AGRT). Composition is skewed to low complexity over residues 1239-1257 (AAAA…VQGA) and 1405-1414 (ATAGEGEQQT). Over residues 1440–1469 (KKKKKKEKKEKKEKKEKKEKKEKKEKKKKK) the composition is skewed to basic residues. The segment covering 1492–1502 (PAAAIPSVLLP) has biased composition (low complexity). Positions 1517-1526 (KKEKKEKKKK) are enriched in basic residues. Residues 1550–1561 (PAAAIPSILLPA) are compositionally biased toward low complexity. A compositionally biased stretch (basic and acidic residues) spans 1569 to 1584 (EKPKEKKTEKKKEKHT). The span at 1595–1604 (LPESETTAVV) shows a compositional bias: polar residues. Low complexity-rich tracts occupy residues 1620 to 1629 (VPSSIASSEA) and 1675 to 1698 (SSSS…SSSS). Positions 1701 to 1711 (AETRAKADALR) are enriched in basic and acidic residues. Composition is skewed to low complexity over residues 1712 to 1722 (ARLQAAQARLA) and 1729 to 1747 (VSSS…FLSS). The stretch at 1766–1828 (QQRLQKMVSG…TRRAKEEKDL (63 aa)) forms a coiled coil. Polar residues predominate over residues 1890 to 1904 (ESRTTAGAKLRQQQL).

It localises to the membrane. In terms of biological role, regulates microneme secretion. Probably involved in regulation of rhoptry and dense granule secretion. In Toxoplasma gondii, this protein is C2 domain-containing protein.